The sequence spans 338 residues: Methionine synthase (338 aa).

Residues His-210, Cys-212, Glu-234, and Cys-294 each coordinate Zn(2+).

The protein belongs to the archaeal MetE family. Requires Zn(2+) as cofactor.

It functions in the pathway amino-acid biosynthesis; L-methionine biosynthesis via de novo pathway. Its function is as follows. Catalyzes the transfer of a methyl group to L-homocysteine resulting in methionine formation. The physiological methyl donor is unknown. The sequence is that of Methionine synthase from Pyrococcus horikoshii (strain ATCC 700860 / DSM 12428 / JCM 9974 / NBRC 100139 / OT-3).